The primary structure comprises 526 residues: Fumitremorgin C synthase (526 aa).

Residues 4-24 (LPLSPAVLFLIIVLPILYLWI) form a helical membrane-spanning segment. Heme is bound at residue cysteine 443.

Belongs to the cytochrome P450 family. It depends on heme as a cofactor.

The protein resides in the membrane. It carries out the reaction tryprostatin A + reduced [NADPH--hemoprotein reductase] + O2 = fumitremorgin C + oxidized [NADPH--hemoprotein reductase] + 2 H2O + H(+). The protein operates within mycotoxin biosynthesis. Its function is as follows. Cytochrome P450 monooxygenase; part of the gene cluster that mediates the biosynthesis of fumitremorgins, indole alkaloids that carry not only intriguing chemical structures, but also interesting biological and pharmacological activities. The biosynthesis of fumitremorgin-type alkaloids begins by condensation of the two amino acids L-tryptophan and L-proline to brevianamide F, catalyzed by the non-ribosomal peptide synthetase ftmA. Brevianamide F is then prenylated by the prenyltransferase ftmPT1/ftmB in the presence of dimethylallyl diphosphate, resulting in the formation of tryprostatin B. The three cytochrome P450 monooxygenases, ftmP450-1/ftmC, ftmP450-2/ftmE and ftmP450-3/FtmG, are responsible for the conversion of tryprostatin B to 6-hydroxytryprostatin B, tryprostatin A to fumitremorgin C and fumitremorgin C to 12,13-dihydroxyfumitremorgin C, respectively. The putative methyltransferase ftmMT/ftmD is expected for the conversion of 6-hydroxytryprostatin B to tryprostatin A. FtmPT2/FtmH catalyzes the prenylation of 12,13-dihydroxyfumitre-morgin C in the presence of dimethylallyl diphosphate, resulting in the formation of fumitremorgin B. Fumitremorgin B is further converted to verruculogen by ftmOx1/ftmF via the insertion of an endoperoxide bond between the two prenyl moieties. In some fungal species, verruculogen is further converted to fumitremorgin A, but the enzymes involved in this step have not been identified yet. This chain is Fumitremorgin C synthase, found in Aspergillus fumigatus (Neosartorya fumigata).